The following is a 428-amino-acid chain: Kynureninase (428 aa).

Pyridoxal 5'-phosphate-binding positions include threonine 104, threonine 105, 132-135 (FPSD), aspartate 213, histidine 216, and tyrosine 238. Residue lysine 239 is modified to N6-(pyridoxal phosphate)lysine. The pyridoxal 5'-phosphate site is built by tryptophan 267 and threonine 295.

This sequence belongs to the kynureninase family. In terms of assembly, homodimer. Requires pyridoxal 5'-phosphate as cofactor.

It carries out the reaction L-kynurenine + H2O = anthranilate + L-alanine + H(+). The enzyme catalyses 3-hydroxy-L-kynurenine + H2O = 3-hydroxyanthranilate + L-alanine + H(+). Its pathway is amino-acid degradation; L-kynurenine degradation; L-alanine and anthranilate from L-kynurenine: step 1/1. It functions in the pathway cofactor biosynthesis; NAD(+) biosynthesis; quinolinate from L-kynurenine: step 2/3. In terms of biological role, catalyzes the cleavage of L-kynurenine (L-Kyn) and L-3-hydroxykynurenine (L-3OHKyn) into anthranilic acid (AA) and 3-hydroxyanthranilic acid (3-OHAA), respectively. The protein is Kynureninase of Bacillus cereus (strain ATCC 14579 / DSM 31 / CCUG 7414 / JCM 2152 / NBRC 15305 / NCIMB 9373 / NCTC 2599 / NRRL B-3711).